Reading from the N-terminus, the 315-residue chain is tRNA dimethylallyltransferase (315 aa).

14–21 (GPTASGKT) is a binding site for ATP. 16 to 21 (TASGKT) is a substrate binding site. Interaction with substrate tRNA stretches follow at residues 39-42 (DSAL), 163-167 (QRIQR), and 248-253 (RCVGYR).

The protein belongs to the IPP transferase family. As to quaternary structure, monomer. Mg(2+) is required as a cofactor.

It carries out the reaction adenosine(37) in tRNA + dimethylallyl diphosphate = N(6)-dimethylallyladenosine(37) in tRNA + diphosphate. Its function is as follows. Catalyzes the transfer of a dimethylallyl group onto the adenine at position 37 in tRNAs that read codons beginning with uridine, leading to the formation of N6-(dimethylallyl)adenosine (i(6)A). The protein is tRNA dimethylallyltransferase of Paraburkholderia xenovorans (strain LB400).